A 203-amino-acid chain; its full sequence is Tegument protein UL51 homolog (203 aa).

The S-palmitoyl cysteine; by host moiety is linked to residue Cys4.

It belongs to the herpesviridae UL51 family. As to quaternary structure, oligomerizes. Interacts with U75; this interaction mediates U75 incorporation to virions. In terms of processing, phosphorylated. Palmitoylation is necessary for Golgi localization.

Its subcellular location is the virion tegument. The protein localises to the host cytoplasm. It is found in the host Golgi apparatus. Plays several roles during the time course of infection, including egress of virus particles from the perinuclear space and secondary envelopment of cytoplasmic capsids that bud into specific trans-Golgi network (TGN)-derived membranes. In Homo sapiens (Human), this protein is Tegument protein UL51 homolog (U44).